A 786-amino-acid chain; its full sequence is Elastin (786 aa).

An N-terminal signal peptide occupies residues 1–26 (MAGLTAAAPRPGVLLLLLSILHPSRP). Pro-34 is modified (hydroxyproline). A hydroxyproline; partial mark is found at Pro-65, Pro-67, and Pro-88. Allysine is present on residues Lys-104 and Lys-107. Pro-116 carries the 4-hydroxyproline; partial modification. Hydroxyproline; partial is present on residues Pro-156, Pro-167, Pro-170, and Pro-177. Pro-190 is subject to 4-hydroxyproline; partial. 3 positions are modified to allysine: Lys-241, Lys-261, and Lys-265. 4-hydroxyproline; partial occurs at positions 283 and 286. At Pro-290 the chain carries Hydroxyproline; partial. 2 positions are modified to allysine: Lys-312 and Lys-315. 4-hydroxyproline; partial occurs at positions 327, 342, and 347. 2 positions are modified to hydroxyproline; partial: Pro-352 and Pro-355. Position 360 is a 4-hydroxyproline; partial (Pro-360). Allysine is present on residues Lys-375, Lys-379, and Lys-382. A 4-hydroxyproline; partial modification is found at Pro-415. Position 421 is a hydroxyproline; partial (Pro-421). 4-hydroxyproline; partial is present on Pro-427. Residues Lys-448 and Lys-451 each carry the allysine modification. Position 465 is a hydroxyproline; partial (Pro-465). A 4-hydroxyproline; partial modification is found at Pro-481. Allysine is present on residues Lys-492 and Lys-496. A hydroxyproline; partial mark is found at Pro-522 and Pro-550. Residues Lys-558, Lys-562, and Lys-566 each carry the allysine modification. Pro-580 carries the post-translational modification 4-hydroxyproline; partial. 4-hydroxyproline occurs at positions 589 and 598. Position 607 is a 4-hydroxyproline; partial (Pro-607). The disordered stretch occupies residues 615-645 (EGVRRSLSPELREGDPSSSQHLPSTPSSPRV). Residues 630 to 645 (PSSSQHLPSTPSSPRV) show a composition bias toward low complexity. Hydroxyproline; partial is present on Pro-646. Residues Lys-653 and Lys-656 each carry the allysine modification. Pro-677 is subject to 4-hydroxyproline; partial. An allysine mark is found at Lys-693, Lys-697, Lys-735, and Lys-738. A hydroxyproline; partial mark is found at Pro-769 and Pro-772. Cysteines 776 and 781 form a disulfide.

The protein belongs to the elastin family. The polymeric elastin chains are cross-linked together into an extensible 3D network. Forms a ternary complex with BGN and MFAP2. Interacts with MFAP2 via divalent cations (calcium &gt; magnesium &gt; manganese) in a dose-dependent and saturating manner. Interacts with FBLN5. Interacts with FBN1. Forms a ternary complex with FBN1 and FBLN2 or FBLN5. Interacts with MFAP4 in a Ca (2+)-dependent manner; this interaction promotes ELN self-assembly. Interacts with EFEMP2 with moderate affinity. Elastin is formed through the cross-linking of its soluble precursor tropoelastin. Cross-linking is initiated through the action of lysyl oxidase on exposed lysines to form allysine. Subsequent spontaneous condensation reactions with other allysine or unmodified lysine residues result in various bi-, tri-, and tetrafunctional cross-links. The most abundant cross-links in mature elastin fibers are lysinonorleucine, allysine aldol, desmosine, and isodesmosine. Post-translationally, hydroxylation on proline residues within the sequence motif, GXPG, is most likely 4-hydroxy as this fits the requirement for 4-hydroxylation in vertebrates. As to expression, expressed within the outer myometrial smooth muscle and throughout the arteriolar tree of uterus (at protein level). Also expressed in the large arteries, lung and skin.

It is found in the secreted. The protein localises to the extracellular space. The protein resides in the extracellular matrix. Major structural protein of tissues such as aorta and nuchal ligament, which must expand rapidly and recover completely. Molecular determinant of the late arterial morphogenesis, stabilizing arterial structure by regulating proliferation and organization of vascular smooth muscle. The sequence is that of Elastin (ELN) from Homo sapiens (Human).